A 319-amino-acid polypeptide reads, in one-letter code: NADH-ubiquinone oxidoreductase chain 1 (319 aa).

8 helical membrane-spanning segments follow: residues 3-23 (LITLIINPLMYIIPILLAMAF), 74-94 (LFLLTPTLALTLALILWIPLP), 106-126 (ILFILAVSSLSVYSILGSGWA), 149-169 (TLGLIIISLIMFTGGFTLTTF), 175-195 (AVWLILPAWPLAAMWFISTLA), 226-246 (LFFLAEYTNILLMNALSTILF), 254-274 (LTINLNWAIKTMILASMFLWV), and 294-314 (FLPLTLALITWHISLPISMAG).

It belongs to the complex I subunit 1 family.

It localises to the mitochondrion inner membrane. It catalyses the reaction a ubiquinone + NADH + 5 H(+)(in) = a ubiquinol + NAD(+) + 4 H(+)(out). In terms of biological role, core subunit of the mitochondrial membrane respiratory chain NADH dehydrogenase (Complex I) that is believed to belong to the minimal assembly required for catalysis. Complex I functions in the transfer of electrons from NADH to the respiratory chain. The immediate electron acceptor for the enzyme is believed to be ubiquinone. This is NADH-ubiquinone oxidoreductase chain 1 (MT-ND1) from Polypterus ornatipinnis (Ornate bichir).